The following is a 233-amino-acid chain: Large ribosomal subunit protein uL1 (233 aa).

The protein belongs to the universal ribosomal protein uL1 family. As to quaternary structure, part of the 50S ribosomal subunit.

Binds directly to 23S rRNA. The L1 stalk is quite mobile in the ribosome, and is involved in E site tRNA release. Its function is as follows. Protein L1 is also a translational repressor protein, it controls the translation of the L11 operon by binding to its mRNA. The chain is Large ribosomal subunit protein uL1 from Photorhabdus laumondii subsp. laumondii (strain DSM 15139 / CIP 105565 / TT01) (Photorhabdus luminescens subsp. laumondii).